The sequence spans 258 residues: Proteasome subunit alpha type-3 (258 aa).

Residues lysine 100, lysine 199, and lysine 231 each participate in a glycyl lysine isopeptide (Lys-Gly) (interchain with G-Cter in ubiquitin) cross-link.

The protein belongs to the peptidase T1A family. As to quaternary structure, the 26S proteasome consists of a 20S proteasome core and two 19S regulatory subunits. The 20S proteasome core is composed of 28 subunits that are arranged in four stacked rings, resulting in a barrel-shaped structure. The two end rings are each formed by seven alpha subunits, and the two central rings are each formed by seven beta subunits. The catalytic chamber with the active sites is on the inside of the barrel.

It localises to the cytoplasm. It is found in the nucleus. The proteasome degrades poly-ubiquitinated proteins in the cytoplasm and in the nucleus. It is essential for the regulated turnover of proteins and for the removal of misfolded proteins. The proteasome is a multicatalytic proteinase complex that is characterized by its ability to cleave peptides with Arg, Phe, Tyr, Leu, and Glu adjacent to the leaving group at neutral or slightly basic pH. It has an ATP-dependent proteolytic activity. The chain is Proteasome subunit alpha type-3 (PRE9) from Saccharomyces cerevisiae (strain ATCC 204508 / S288c) (Baker's yeast).